Here is a 654-residue protein sequence, read N- to C-terminus: Probable Xaa-Pro aminopeptidase P (654 aa).

Residues Asp449, Asp460, Glu558, and Glu572 each contribute to the Mn(2+) site.

The protein belongs to the peptidase M24B family. The cofactor is Mn(2+).

It catalyses the reaction Release of any N-terminal amino acid, including proline, that is linked to proline, even from a dipeptide or tripeptide.. In terms of biological role, catalyzes the removal of a penultimate prolyl residue from the N-termini of peptides. The polypeptide is Probable Xaa-Pro aminopeptidase P (ampp) (Aspergillus fumigatus (strain CBS 144.89 / FGSC A1163 / CEA10) (Neosartorya fumigata)).